The following is a 181-amino-acid chain: Inorganic pyrophosphatase (181 aa).

Lysine 16, arginine 30, and tyrosine 42 together coordinate substrate. Mg(2+) is bound by residues aspartate 52, aspartate 57, and aspartate 89. Tyrosine 126 provides a ligand contact to substrate.

The protein belongs to the PPase family. In terms of assembly, homohexamer. Mg(2+) serves as cofactor.

The protein resides in the cytoplasm. It carries out the reaction diphosphate + H2O = 2 phosphate + H(+). Its function is as follows. Catalyzes the hydrolysis of inorganic pyrophosphate (PPi) forming two phosphate ions. In Ureaplasma parvum serovar 3 (strain ATCC 700970), this protein is Inorganic pyrophosphatase.